Here is a 185-residue protein sequence, read N- to C-terminus: Threonylcarbamoyl-AMP synthase (185 aa).

The YrdC-like domain occupies 4–185 (SWRVQQAARE…LATGKVVRPS (182 aa)).

Belongs to the SUA5 family. TsaC subfamily.

The protein resides in the cytoplasm. It catalyses the reaction L-threonine + hydrogencarbonate + ATP = L-threonylcarbamoyladenylate + diphosphate + H2O. Functionally, required for the formation of a threonylcarbamoyl group on adenosine at position 37 (t(6)A37) in tRNAs that read codons beginning with adenine. Catalyzes the conversion of L-threonine, HCO(3)(-)/CO(2) and ATP to give threonylcarbamoyl-AMP (TC-AMP) as the acyladenylate intermediate, with the release of diphosphate. This is Threonylcarbamoyl-AMP synthase from Pseudomonas fluorescens (strain ATCC BAA-477 / NRRL B-23932 / Pf-5).